Consider the following 577-residue polypeptide: 5'-nucleotidase (577 aa).

A signal peptide spans 1 to 30 (MPRVPSASATGSSALLSLLCAFSLGRAAPF). Positions 39, 41, 86, and 118 each coordinate Zn(2+). Residue N135 is glycosylated (N-linked (GlcNAc...) asparagine). H221 and H244 together coordinate Zn(2+). N246 contacts substrate. N311 and N347 each carry an N-linked (GlcNAc...) asparagine glycan. Disulfide bonds link C353-C358 and C365-C387. R354 contributes to the substrate binding site. Q390 and R395 together coordinate substrate. An N-linked (GlcNAc...) asparagine glycan is attached at N403. F417 is a binding site for substrate. C476 and C479 are disulfide-bonded. 500-506 (YIAEGGD) is a substrate binding site. S552 carries the GPI-anchor amidated serine lipid modification. Positions 553–577 (ATLPIINLKIGLSLFAFLTWFLHCS) are cleaved as a propeptide — removed in mature form.

It belongs to the 5'-nucleotidase family. In terms of assembly, homodimer. The cofactor is Zn(2+).

The protein resides in the cell membrane. It catalyses the reaction a ribonucleoside 5'-phosphate + H2O = a ribonucleoside + phosphate. In terms of biological role, hydrolyzes extracellular nucleotides into membrane permeable nucleosides. This chain is 5'-nucleotidase, found in Diplobatis ommata (Ocellated electric ray).